Reading from the N-terminus, the 61-residue chain is Large ribosomal subunit protein uL30 (61 aa).

Belongs to the universal ribosomal protein uL30 family. In terms of assembly, part of the 50S ribosomal subunit.

This chain is Large ribosomal subunit protein uL30, found in Nitrosomonas eutropha (strain DSM 101675 / C91 / Nm57).